The following is a 276-amino-acid chain: 1H-3-hydroxy-4-oxoquinaldine 2,4-dioxygenase (276 aa).

Residues 28–150 enclose the AB hydrolase-1 domain; sequence PAILLLPGWC…TLLKDPERWR (123 aa). Substrate-binding positions include 36 to 38, 100 to 101, and Trp160; these read WCH and HS. His251 (proton donor/acceptor) is an active-site residue.

This sequence belongs to the AB hydrolase superfamily. The cofactor is None. Contrary to most other dioxygenases, this enzyme does not require a cofactor for catalysis..

The enzyme catalyses 3-hydroxy-2-methyl-1H-quinolin-4-one + O2 = N-acetylanthranilate + CO + H(+). In terms of biological role, ring-cleaving dioxygenase involved in quinaldine degradation and utilization. The polypeptide is 1H-3-hydroxy-4-oxoquinaldine 2,4-dioxygenase (hod) (Paenarthrobacter nitroguajacolicus (Arthrobacter nitroguajacolicus)).